A 30-amino-acid polypeptide reads, in one-letter code: Root cyclotide 1 (30 aa).

A cross-link (cyclopeptide (Gly-Asn)) is located at residues 1-30; sequence GIPCAESCVWIPCTVTALLGCSCSNKVCYN. 3 disulfides stabilise this stretch: C4/C21, C8/C23, and C13/C28.

In terms of processing, this is a cyclic peptide. As to expression, expressed in roots.

Its function is as follows. Probably participates in a plant defense mechanism. The chain is Root cyclotide 1 from Viola hederacea (Australian violet).